We begin with the raw amino-acid sequence, 512 residues long: Probable multidrug resistance protein EmrY (512 aa).

Topologically, residues 1-8 (MAITKSTP) are cytoplasmic. The chain crosses the membrane as a helical span at residues 9-29 (APLTGGTLWCVTIALSLATFM). Residue glutamine 30 is a topological domain, periplasmic. A helical transmembrane segment spans residues 31 to 51 (MLDSTISNVAIPTISGFLGAS). The Cytoplasmic portion of the chain corresponds to 52 to 53 (TD). Residues 54 to 74 (EGTWVITSFGVANAIAIPVTG) form a helical membrane-spanning segment. At 75–84 (RLAQRIGELR) the chain is on the periplasmic side. Transmembrane regions (helical) follow at residues 85–105 (LFLL…LSTN) and 106–126 (LDVL…LIPL). At 127–141 (SQSLLLRNYPPEKRT) the chain is on the periplasmic side. The chain crosses the membrane as a helical span at residues 142–162 (FALALWSMTVIIAPICGPILG). Over 163–172 (GYICDNFSWG) the chain is Cytoplasmic. Residues 173-193 (WIFLINVPMGIIVLTLCLTLL) form a helical membrane-spanning segment. Topologically, residues 194–204 (KGRETETSPVK) are periplasmic. A helical transmembrane segment spans residues 205 to 225 (MNLPGLTLLVLGVGGLQIMLD). The Cytoplasmic portion of the chain corresponds to 226–234 (KGRDLDWFN). The chain crosses the membrane as a helical span at residues 235–255 (SSTIIILTVVSVISLISLVIW). The Periplasmic portion of the chain corresponds to 256–273 (ESTSENPILDLSLFKSRN). The helical transmembrane segment at 274–294 (FTIGIVSITCAYLFYSGAIVL) threads the bilayer. Residues 295–307 (MPQLLQETMGYNA) lie on the Cytoplasmic side of the membrane. The chain crosses the membrane as a helical span at residues 308-328 (IWAGLAYAPIGIMPLLISPLI). Residues 329 to 338 (GRYGNKIDMR) are Periplasmic-facing. Residues 339–359 (LLVTFSFLMYAVCYYWRSVTF) form a helical membrane-spanning segment. At 360-364 (MPTID) the chain is on the cytoplasmic side. A helical transmembrane segment spans residues 365–385 (FTGIILPQFFQGFAVACFFLP). At 386-486 (LTTISFSGLP…LSISANEIFR (101 aa)) the chain is on the periplasmic side. The chain crosses the membrane as a helical span at residues 487-507 (MAAIAFILLTVLVWFAKPPFT). At 508 to 512 (AKGVG) the chain is on the cytoplasmic side.

Belongs to the major facilitator superfamily. EmrB family. As to quaternary structure, part of the tripartite efflux system EmrYK-TolC, which is composed of an inner membrane transporter, EmrY, a membrane fusion protein, EmrK, and an outer membrane component, TolC. The complex forms a large protein conduit and can translocate molecules across both the inner and outer membranes.

It is found in the cell inner membrane. In terms of biological role, part of the tripartite efflux system EmrYK-TolC, which confers resistance to various drugs. The protein is Probable multidrug resistance protein EmrY (emrY) of Escherichia coli (strain K12).